Here is a 337-residue protein sequence, read N- to C-terminus: 4-hydroxyproline 2-epimerase 2 (337 aa).

Residue Cys-90 is the Proton acceptor of the active site. Substrate is bound by residues 91 to 92 (GH), His-223, and Asp-249. Cys-253 serves as the catalytic Proton donor. Substrate is bound at residue 254-255 (GT).

This sequence belongs to the proline racemase family.

The catalysed reaction is trans-4-hydroxy-L-proline = cis-4-hydroxy-D-proline. Its function is as follows. Catalyzes the epimerization of trans-4-hydroxy-L-proline (t4LHyp) to cis-4-hydroxy-D-proline (c4DHyp). Is likely involved in a degradation pathway that converts t4LHyp to alpha-ketoglutarate. Can also catalyze the epimerization of trans-3-hydroxy-L-proline (t3LHyp) to cis-3-hydroxy-D-proline (c3DHyp), albeit with 170-fold lower efficiency. Displays no proline racemase activity. This is 4-hydroxyproline 2-epimerase 2 from Brucella anthropi (strain ATCC 49188 / DSM 6882 / CCUG 24695 / JCM 21032 / LMG 3331 / NBRC 15819 / NCTC 12168 / Alc 37) (Ochrobactrum anthropi).